The following is a 99-amino-acid chain: Aspartyl/glutamyl-tRNA(Asn/Gln) amidotransferase subunit C (99 aa).

The protein belongs to the GatC family. As to quaternary structure, heterotrimer of A, B and C subunits.

It catalyses the reaction L-glutamyl-tRNA(Gln) + L-glutamine + ATP + H2O = L-glutaminyl-tRNA(Gln) + L-glutamate + ADP + phosphate + H(+). The enzyme catalyses L-aspartyl-tRNA(Asn) + L-glutamine + ATP + H2O = L-asparaginyl-tRNA(Asn) + L-glutamate + ADP + phosphate + 2 H(+). Its function is as follows. Allows the formation of correctly charged Asn-tRNA(Asn) or Gln-tRNA(Gln) through the transamidation of misacylated Asp-tRNA(Asn) or Glu-tRNA(Gln) in organisms which lack either or both of asparaginyl-tRNA or glutaminyl-tRNA synthetases. The reaction takes place in the presence of glutamine and ATP through an activated phospho-Asp-tRNA(Asn) or phospho-Glu-tRNA(Gln). The chain is Aspartyl/glutamyl-tRNA(Asn/Gln) amidotransferase subunit C from Orientia tsutsugamushi (strain Ikeda) (Rickettsia tsutsugamushi).